The sequence spans 350 residues: Alcohol dehydrogenase (350 aa).

Cys46 contributes to the Zn(2+) binding site. Residues His47, Thr48, and His51 each coordinate NAD(+). 6 residues coordinate Zn(2+): His69, Cys100, Cys103, Cys106, Cys114, and Cys156. Positions 183, 184, 185, and 204 each coordinate NAD(+). Residue Thr205 is modified to Phosphothreonine. Residues Lys209 and Phe224 each contribute to the NAD(+) site. At Thr250 the chain carries Phosphothreonine. NAD(+) contacts are provided by Val271, Met273, Ser296, Val298, and Arg343.

The protein belongs to the zinc-containing alcohol dehydrogenase family. Homotetramer. The cofactor is Zn(2+).

The protein resides in the cytoplasm. The catalysed reaction is a primary alcohol + NAD(+) = an aldehyde + NADH + H(+). The enzyme catalyses a secondary alcohol + NAD(+) = a ketone + NADH + H(+). It carries out the reaction ethanol + NAD(+) = acetaldehyde + NADH + H(+). Its function is as follows. Reduces acetaldehyde to ethanol during the fermentation of glucose. The sequence is that of Alcohol dehydrogenase (adh1) from Schizosaccharomyces pombe (strain 972 / ATCC 24843) (Fission yeast).